A 329-amino-acid chain; its full sequence is Biotin synthase (329 aa).

Residues 46 to 275 (FFGRRLKLVR…LNPKAELRAS (230 aa)) enclose the Radical SAM core domain. The [4Fe-4S] cluster site is built by cysteine 64, cysteine 68, and cysteine 71. 4 residues coordinate [2Fe-2S] cluster: cysteine 108, cysteine 140, cysteine 200, and arginine 273.

Belongs to the radical SAM superfamily. Biotin synthase family. Homodimer. Requires [4Fe-4S] cluster as cofactor. The cofactor is [2Fe-2S] cluster.

It catalyses the reaction (4R,5S)-dethiobiotin + (sulfur carrier)-SH + 2 reduced [2Fe-2S]-[ferredoxin] + 2 S-adenosyl-L-methionine = (sulfur carrier)-H + biotin + 2 5'-deoxyadenosine + 2 L-methionine + 2 oxidized [2Fe-2S]-[ferredoxin]. It participates in cofactor biosynthesis; biotin biosynthesis; biotin from 7,8-diaminononanoate: step 2/2. Functionally, catalyzes the conversion of dethiobiotin (DTB) to biotin by the insertion of a sulfur atom into dethiobiotin via a radical-based mechanism. The polypeptide is Biotin synthase (Thermus thermophilus (strain ATCC BAA-163 / DSM 7039 / HB27)).